Consider the following 96-residue polypeptide: Co-chaperonin GroES (96 aa).

This sequence belongs to the GroES chaperonin family. In terms of assembly, heptamer of 7 subunits arranged in a ring. Interacts with the chaperonin GroEL.

Its subcellular location is the cytoplasm. Functionally, together with the chaperonin GroEL, plays an essential role in assisting protein folding. The GroEL-GroES system forms a nano-cage that allows encapsulation of the non-native substrate proteins and provides a physical environment optimized to promote and accelerate protein folding. GroES binds to the apical surface of the GroEL ring, thereby capping the opening of the GroEL channel. The polypeptide is Co-chaperonin GroES (Shewanella loihica (strain ATCC BAA-1088 / PV-4)).